Here is a 333-residue protein sequence, read N- to C-terminus: MKKIAVDAMGGDFAPQSVVEGVEKARNKYPDLRFMLFGDEQKIREILTSDKNIEIIQTTEVIDMNDEPVKAIRRKKDSSLVRAAYAVKEGKADALFSCGNTGALLAAGLLIVGRIKGITRPGLLSTLPVLTKEGGAFNLLDSGANADNKPEQLYQYALLGKYYAESVRNIKNPRIGLLNNGTEPHKGSKLTLEAHNLIAADSSINFVGNVESKDILKGVCDVVVADGFTGNAVLKAIEGTAGTAMHLLKDTIMSAGLLGKIGGLLLKPSIMKIRNKMSASQYGGAVLLGAKAPVVKAHGASDAETVYYTVKQINDMLENDMLSKFTDYFNKNV.

It belongs to the PlsX family. As to quaternary structure, homodimer. Probably interacts with PlsY.

The protein localises to the cytoplasm. It catalyses the reaction a fatty acyl-[ACP] + phosphate = an acyl phosphate + holo-[ACP]. It functions in the pathway lipid metabolism; phospholipid metabolism. Its function is as follows. Catalyzes the reversible formation of acyl-phosphate (acyl-PO(4)) from acyl-[acyl-carrier-protein] (acyl-ACP). This enzyme utilizes acyl-ACP as fatty acyl donor, but not acyl-CoA. The sequence is that of Phosphate acyltransferase from Ligilactobacillus salivarius (strain UCC118) (Lactobacillus salivarius).